Reading from the N-terminus, the 1451-residue chain is MEETGDSKLVPRDEEEIVNDNDETKAPSEEEEGEDVFDSSEEDEDIDEDEDEARKVQEGFIVNDDDENEDPGTSISKKRRKHKRREREEDDRLSEDDLDLLMENAGVERTKASSSSGKFKRLKRVGDEGNAAESESDNVAASRQDSTSKLEDFFSEDEEEEESGLRNGRNNEYGRDEEDHENRNRTADKGGILDELDDFIEDDEFSDEDDETRQRRIQEKKLLREQSIKQPTQITGLSSDKIDEMYDIFGDGHDYDWALEIENEELENGNDNNEAEEEEIDEETGAIKSTKKKISLQDIYDLEDLKKNLMTEGDMKIRKTDIPERYQELRAGITDYGNMSSEDQELERNWIAEKISVDKNFDANYDLTEFKEAIGNAIKFITKENLEVPFIYAYRRNYISSREKDGFLLTEDDLWDIVSLDIEFHSLVNKKDYVQRFYAELHIDDPIVTEYFKNQNTASIAELNSLQDIYDYLEFKYANEINEMFINHTGKTGKKHLKNSSYEKFKASPLYQAVSDIGISAEDVGENISSQHQIHPPVDHPSSKPVEVIESILNANSGDLQVFTSNTKLAIDTVQKYYSLELSKNTKIREKVRSDFSKYYLADVVLTAKGKKEIQKGSLYEDIKYAINRTPMHFRRDPDVFLKMVEAESLNLLSVKLHMSSQAQYIEHLFQIALETTNTSDIAIEWNNFRKLAFNQAMDKIFQDISQEVKDNLTKNCQKLVAKTVRHKFMTKLDQAPFIPNVRDPKIPKILSLTCGQGRFGADAIIAVYVNRKGDFIRDYKIVDNPFDKTNPEKFEDTLDNIIQSCQPNAIGINGPNPKTQKFYKRLQEVLHKKQIVDSRGHTIPIIYVEDEVAIRYQNSERAAQEFPNKPPLVKYCIALARYMHSPLLEYANLTSEEVRSLSIHPHQNLLSSEQLSWALETAFVDIVNLVSVEVNKATDNNYYASALKYISGFGKRKAIDFLQSLQRLNEPLLARQQLITHNILHKTIFMNSAGFLYISWNEKRQKYEDLEHDQLDSTRIHPEDYHLATKVAADALEYDPDTIAEKEEQGTMSEFIELLREDPDRRAKLESLNLESYAEELEKNTGLRKLNNLNTIVLELLDGFEELRNDFHPLQGDEIFQSLTGESEKTFFKGSIIPVRVERFWHNDIICTTNSEVECVVNAQRHAGAQLRRPANEIYEIGKTYPAKVIYIDYANITAEVSLLDHDVKQQYVPISYSKDPSIWDLKQELEDAEEERKLMMAEARAKRTHRVINHPYYFPFNGRQAEDYLRSKERGEFVIRQSSRGDDHLVITWKLDKDLFQHIDIQELEKENPLALGKVLIVDNQKYNDLDQIIVEYLQNKVRLLNEMTSSEKFKSGTKKDVVKFIEDYSRVNPNKSVYYFSLNHDNPGWFYLMFKINANSKLYTWNVKLTNTGYFLVNYNYPSVIQLCNGFKTLLKSNSSKNRMNNYR.

Positions M1–R12 are enriched in basic and acidic residues. A disordered region spans residues M1–I217. The Nuclear localization signal motif lies at K8 to R12. Residues E29–D51 are compositionally biased toward acidic residues. Positions S76 to R85 are enriched in basic residues. The Nuclear localization signal signature appears at K77 to R85. A compositionally biased stretch (acidic residues) spans E88–L100. At S94 the chain carries Phosphoserine. Residues K120 to V125 carry the Nuclear localization signal motif. Phosphoserine occurs at positions 134, 136, 148, and 155. Residues F153–E162 show a composition bias toward acidic residues. Residues H180–I192 show a composition bias toward basic and acidic residues. Acidic residues predominate over residues D194 to E211. S206 and S295 each carry phosphoserine. Residues P1257–E1354 form the SH2 domain.

This sequence belongs to the SPT6 family. As to quaternary structure, interacts with CTR9.

The protein resides in the nucleus. Its subcellular location is the chromosome. Functionally, histone H3-H4 chaperone that plays a role in maintenance of chromatin structure during RNA polymerase II transcription elongation thereby repressing transcription initiation from cryptic promoters. Mediates the reassembly of nucleosomes onto the promoters of at least a selected set of genes during repression; the nucleosome reassembly is essential for transcriptional repression. Essential for viability. The chain is Transcription elongation factor SPT6 (SPT6) from Saccharomyces cerevisiae (strain ATCC 204508 / S288c) (Baker's yeast).